A 143-amino-acid chain; its full sequence is Transcriptional regulator MraZ (143 aa).

SpoVT-AbrB domains lie at 5–47 (EYFH…PVSA) and 76–119 (ASNQ…DKEK).

It belongs to the MraZ family. Forms oligomers.

Its subcellular location is the cytoplasm. It is found in the nucleoid. The chain is Transcriptional regulator MraZ from Finegoldia magna (strain ATCC 29328 / DSM 20472 / WAL 2508) (Peptostreptococcus magnus).